We begin with the raw amino-acid sequence, 347 residues long: MTTLNLSIFPSVKISSSASIPGFIKIQPFLLRRKLSTVLSVTARDEGIIHNHFDFTSYMIGKANAVNEALDSAVSLREPIKIHEAIRYSLLARGKRVRPVLCIAACELVGGEESVALPAACAVEMIHTMSLIHDDLPCMDNDDLRRGKPTNHKVFGEDVAVLAGDALISFAFEHLATSTAVSPARVVRAIGELAKAIGSKGLVAGQVVDLTSGGMDQNDVGLEVLEFIHVHKTAVLLEAATVLGAIVGGGSDEEVEKLRRFARCIGLLFQVVDDILDVTKSSEELGKTAGKDLIADKLTYPKLMGLEKSKDFADKLLSDAHEQLHGFDSSRVKPLLALANYIAKRQN.

The transit peptide at 1-39 (MTTLNLSIFPSVKISSSASIPGFIKIQPFLLRRKLSTVL) directs the protein to the chloroplast. Residues Lys-95, Arg-98, and His-127 each contribute to the isopentenyl diphosphate site. Mg(2+)-binding residues include Asp-134 and Asp-140. Arg-145 contacts dimethylallyl diphosphate. Residue Arg-146 participates in isopentenyl diphosphate binding. Residues Lys-232, Thr-233, Gln-270, Lys-287, and Lys-297 each coordinate dimethylallyl diphosphate.

Belongs to the FPP/GGPP synthase family. As to quaternary structure, monomer. Requires Mg(2+) as cofactor.

The protein localises to the plastid. The protein resides in the chloroplast. It carries out the reaction isopentenyl diphosphate + dimethylallyl diphosphate = (2E)-geranyl diphosphate + diphosphate. The catalysed reaction is isopentenyl diphosphate + (2E)-geranyl diphosphate = (2E,6E)-farnesyl diphosphate + diphosphate. The enzyme catalyses isopentenyl diphosphate + (2E,6E)-farnesyl diphosphate = (2E,6E,10E)-geranylgeranyl diphosphate + diphosphate. The protein operates within isoprenoid biosynthesis; farnesyl diphosphate biosynthesis; farnesyl diphosphate from geranyl diphosphate and isopentenyl diphosphate: step 1/1. It functions in the pathway isoprenoid biosynthesis; geranyl diphosphate biosynthesis; geranyl diphosphate from dimethylallyl diphosphate and isopentenyl diphosphate: step 1/1. It participates in isoprenoid biosynthesis; geranylgeranyl diphosphate biosynthesis; geranylgeranyl diphosphate from farnesyl diphosphate and isopentenyl diphosphate: step 1/1. In terms of biological role, catalyzes the trans-addition of the three molecules of IPP onto DMAPP to form geranylgeranyl pyrophosphate. The polypeptide is Geranylgeranyl pyrophosphate synthase 7, chloroplastic (Arabidopsis thaliana (Mouse-ear cress)).